Here is a 620-residue protein sequence, read N- to C-terminus: Magnesium-chelatase 67 kDa subunit (620 aa).

Position 33-40 (33-40 (STVGSGKS)) interacts with ATP. Positions 272–322 (ATRMPEREPNPEEMAQDEPPPQEEQPQDEAEDQNAPPDEADSDADEEQEET) are disordered. Positions 296-322 (QPQDEAEDQNAPPDEADSDADEEQEET) are enriched in acidic residues. The VWFA domain maps to 432–620 (LFIFMVDASG…AEQIVEAALS (189 aa)).

Belongs to the Mg-chelatase subunits D/I family.

The enzyme catalyses protoporphyrin IX + Mg(2+) + ATP + H2O = Mg-protoporphyrin IX + ADP + phosphate + 3 H(+). It participates in porphyrin-containing compound metabolism; bacteriochlorophyll biosynthesis. Functionally, involved in bacteriochlorophyll biosynthesis; introduces a magnesium ion into protoporphyrin IX to yield Mg-protoporphyrin IX. This is Magnesium-chelatase 67 kDa subunit (bchD) from Chlorobaculum tepidum (strain ATCC 49652 / DSM 12025 / NBRC 103806 / TLS) (Chlorobium tepidum).